The following is a 365-amino-acid chain: UDP-N-acetylglucosamine--N-acetylmuramyl-(pentapeptide) pyrophosphoryl-undecaprenol N-acetylglucosamine transferase (365 aa).

Residues 11–13 (TGG), N124, R165, S192, I246, and Q291 each bind UDP-N-acetyl-alpha-D-glucosamine.

This sequence belongs to the glycosyltransferase 28 family. MurG subfamily.

The protein resides in the cell inner membrane. It catalyses the reaction di-trans,octa-cis-undecaprenyl diphospho-N-acetyl-alpha-D-muramoyl-L-alanyl-D-glutamyl-meso-2,6-diaminopimeloyl-D-alanyl-D-alanine + UDP-N-acetyl-alpha-D-glucosamine = di-trans,octa-cis-undecaprenyl diphospho-[N-acetyl-alpha-D-glucosaminyl-(1-&gt;4)]-N-acetyl-alpha-D-muramoyl-L-alanyl-D-glutamyl-meso-2,6-diaminopimeloyl-D-alanyl-D-alanine + UDP + H(+). Its pathway is cell wall biogenesis; peptidoglycan biosynthesis. Cell wall formation. Catalyzes the transfer of a GlcNAc subunit on undecaprenyl-pyrophosphoryl-MurNAc-pentapeptide (lipid intermediate I) to form undecaprenyl-pyrophosphoryl-MurNAc-(pentapeptide)GlcNAc (lipid intermediate II). The protein is UDP-N-acetylglucosamine--N-acetylmuramyl-(pentapeptide) pyrophosphoryl-undecaprenol N-acetylglucosamine transferase of Nitratidesulfovibrio vulgaris (strain ATCC 29579 / DSM 644 / CCUG 34227 / NCIMB 8303 / VKM B-1760 / Hildenborough) (Desulfovibrio vulgaris).